We begin with the raw amino-acid sequence, 464 residues long: Chromosomal replication initiator protein DnaA (464 aa).

Residues 1–74 are domain I, interacts with DnaA modulators; it reads MDAVGYEVFW…ERKFLELSGH (74 aa). The interval 74 to 117 is domain II; the sequence is HPIKLLFAVKKGTPHGNTAPPKHVHTYLEKNSPAEVPSKKSFHP. Residues 118–341 are domain III, AAA+ region; sequence DLNRDYTFEN…GALTKIIAFI (224 aa). 4 residues coordinate ATP: Gly162, Gly164, Lys165, and Thr166. The interval 342–464 is domain IV, binds dsDNA; the sequence is EVSGSITIDI…LKSKVQDSIR (123 aa).

The protein belongs to the DnaA family. In terms of assembly, oligomerizes as a right-handed, spiral filament on DNA at oriC.

The protein resides in the cytoplasm. Its function is as follows. Plays an essential role in the initiation and regulation of chromosomal replication. ATP-DnaA binds to the origin of replication (oriC) to initiate formation of the DNA replication initiation complex once per cell cycle. Binds the DnaA box (a 9 base pair repeat at the origin) and separates the double-stranded (ds)DNA. Forms a right-handed helical filament on oriC DNA; dsDNA binds to the exterior of the filament while single-stranded (ss)DNA is stabiized in the filament's interior. The ATP-DnaA-oriC complex binds and stabilizes one strand of the AT-rich DNA unwinding element (DUE), permitting loading of DNA polymerase. After initiation quickly degrades to an ADP-DnaA complex that is not apt for DNA replication. Binds acidic phospholipids. This chain is Chromosomal replication initiator protein DnaA, found in Treponema pallidum (strain Nichols).